A 459-amino-acid chain; its full sequence is Bifunctional protein GlmU (459 aa).

The segment at 1-229 (MSNFAIILAA…FDESLGVNDR (229 aa)) is pyrophosphorylase. UDP-N-acetyl-alpha-D-glucosamine-binding positions include 8 to 11 (LAAG), K22, Q72, and 77 to 78 (GT). D102 contributes to the Mg(2+) binding site. Positions 139, 154, 169, and 227 each coordinate UDP-N-acetyl-alpha-D-glucosamine. N227 provides a ligand contact to Mg(2+). Residues 230 to 250 (VALATAESVMRRRINHKHMVN) are linker. The interval 251–459 (GVSFVNPEAT…TRLPHHPKNQ (209 aa)) is N-acetyltransferase. UDP-N-acetyl-alpha-D-glucosamine contacts are provided by R332 and K350. The Proton acceptor role is filled by H362. The UDP-N-acetyl-alpha-D-glucosamine site is built by Y365 and N376. Residues A379, 385–386 (NY), S404, A422, and R439 contribute to the acetyl-CoA site.

In the N-terminal section; belongs to the N-acetylglucosamine-1-phosphate uridyltransferase family. This sequence in the C-terminal section; belongs to the transferase hexapeptide repeat family. As to quaternary structure, homotrimer. The cofactor is Mg(2+).

The protein localises to the cytoplasm. The enzyme catalyses alpha-D-glucosamine 1-phosphate + acetyl-CoA = N-acetyl-alpha-D-glucosamine 1-phosphate + CoA + H(+). It carries out the reaction N-acetyl-alpha-D-glucosamine 1-phosphate + UTP + H(+) = UDP-N-acetyl-alpha-D-glucosamine + diphosphate. Its pathway is nucleotide-sugar biosynthesis; UDP-N-acetyl-alpha-D-glucosamine biosynthesis; N-acetyl-alpha-D-glucosamine 1-phosphate from alpha-D-glucosamine 6-phosphate (route II): step 2/2. It functions in the pathway nucleotide-sugar biosynthesis; UDP-N-acetyl-alpha-D-glucosamine biosynthesis; UDP-N-acetyl-alpha-D-glucosamine from N-acetyl-alpha-D-glucosamine 1-phosphate: step 1/1. It participates in bacterial outer membrane biogenesis; LPS lipid A biosynthesis. Catalyzes the last two sequential reactions in the de novo biosynthetic pathway for UDP-N-acetylglucosamine (UDP-GlcNAc). The C-terminal domain catalyzes the transfer of acetyl group from acetyl coenzyme A to glucosamine-1-phosphate (GlcN-1-P) to produce N-acetylglucosamine-1-phosphate (GlcNAc-1-P), which is converted into UDP-GlcNAc by the transfer of uridine 5-monophosphate (from uridine 5-triphosphate), a reaction catalyzed by the N-terminal domain. This chain is Bifunctional protein GlmU, found in Streptococcus pneumoniae (strain Hungary19A-6).